Consider the following 494-residue polypeptide: Glutamyl-tRNA(Gln) amidotransferase subunit A (494 aa).

Active-site charge relay system residues include Lys78 and Ser158. The active-site Acyl-ester intermediate is the Ser182.

It belongs to the amidase family. GatA subfamily. As to quaternary structure, heterotrimer of A, B and C subunits.

The catalysed reaction is L-glutamyl-tRNA(Gln) + L-glutamine + ATP + H2O = L-glutaminyl-tRNA(Gln) + L-glutamate + ADP + phosphate + H(+). Its function is as follows. Allows the formation of correctly charged Gln-tRNA(Gln) through the transamidation of misacylated Glu-tRNA(Gln) in organisms which lack glutaminyl-tRNA synthetase. The reaction takes place in the presence of glutamine and ATP through an activated gamma-phospho-Glu-tRNA(Gln). The chain is Glutamyl-tRNA(Gln) amidotransferase subunit A from Xanthobacter autotrophicus (strain ATCC BAA-1158 / Py2).